The chain runs to 635 residues: BTB/POZ domain-containing protein SETH6 (635 aa).

The 66-residue stretch at 39-104 folds into the BTB domain; that stretch reads SDLTIEVGSA…CYGVGVQYNS (66 aa). The NPH3 domain occupies 206-494; it reads DWWGRSLPIL…VQVLFYEQTR (289 aa). Position 435 is a phosphotyrosine (Y435). Residues 604-635 are disordered; it reads QSVASSGKKHTEEKTNSERRFMFQKRRCHSVS. The segment covering 612 to 624 has biased composition (basic and acidic residues); it reads KHTEEKTNSERRF. Residues 625 to 635 are compositionally biased toward basic residues; sequence MFQKRRCHSVS.

Belongs to the NPH3 family.

It participates in protein modification; protein ubiquitination. In terms of biological role, may act as a substrate-specific adapter of an E3 ubiquitin-protein ligase complex (CUL3-RBX1-BTB) which mediates the ubiquitination and subsequent proteasomal degradation of target proteins. This chain is BTB/POZ domain-containing protein SETH6 (SETH6), found in Arabidopsis thaliana (Mouse-ear cress).